The primary structure comprises 261 residues: Putative cytochrome YdhU (261 aa).

Residues 25–45 form a helical membrane-spanning segment; that stretch reads FWPVWLIIAGVLLVGMWLVLG. Histidine 77 lines the heme b pocket. The next 3 helical transmembrane spans lie at 81–101, 108–128, and 182–202; these read ALLFVLLLASGLINHFAMVGA, VAVHEVCGFLLLACWLGFVLI, and VAYVGVMYGLLPLLLLTGLLC. Heme b is bound at residue histidine 111. Heme b is bound by residues histidine 223 and histidine 237. A helical membrane pass occupies residues 224-244; that stretch reads FALAFISLFFIFGHLYLCTTG. Residue histidine 237 coordinates a menaquinone.

Belongs to the PhsC family. It depends on heme as a cofactor.

Its subcellular location is the cell inner membrane. The sequence is that of Putative cytochrome YdhU (ydhU) from Escherichia coli (strain K12).